We begin with the raw amino-acid sequence, 662 residues long: DNA topoisomerase 4 subunit B (662 aa).

Residues Tyr20, Asn60, Asp87, 129–135 (GLHGVGI), and Lys359 each bind ATP. The region spanning 439–553 (TELFIVEGDS…EGHLYLAKPP (115 aa)) is the Toprim domain. Mg(2+) contacts are provided by Glu445, Asp518, and Asp520.

It belongs to the type II topoisomerase family. ParE type 1 subfamily. Heterotetramer composed of ParC and ParE. The cofactor is Mg(2+). Mn(2+) is required as a cofactor. Requires Ca(2+) as cofactor.

It carries out the reaction ATP-dependent breakage, passage and rejoining of double-stranded DNA.. Its function is as follows. Topoisomerase IV is essential for chromosome segregation. It relaxes supercoiled DNA. Performs the decatenation events required during the replication of a circular DNA molecule. The chain is DNA topoisomerase 4 subunit B from Rickettsia prowazekii (strain Madrid E).